The following is a 483-amino-acid chain: Replication factor C large subunit (483 aa).

44–51 serves as a coordination point for ATP; the sequence is GSPGVGKT. A disordered region spans residues 415 to 483; it reads AVDHGGGIFA…DGQAGLSDFM (69 aa). The span at 430 to 443 shows a compositional bias: acidic residues; it reads AQSDTESDDDDDGD. The span at 451 to 463 shows a compositional bias: basic and acidic residues; sequence DEPKEESVNREQS.

It belongs to the activator 1 small subunits family. RfcL subfamily. Heteromultimer composed of small subunits (RfcS) and large subunits (RfcL).

Functionally, part of the RFC clamp loader complex which loads the PCNA sliding clamp onto DNA. This is Replication factor C large subunit from Natronomonas pharaonis (strain ATCC 35678 / DSM 2160 / CIP 103997 / JCM 8858 / NBRC 14720 / NCIMB 2260 / Gabara) (Halobacterium pharaonis).